Reading from the N-terminus, the 493-residue chain is NADH-ubiquinone oxidoreductase 51 kDa subunit, mitochondrial (493 aa).

Residues 1–27 (MLSRTAAPTKASARTLSRAAAEQCRTF) constitute a mitochondrion transit peptide. 96–105 (GRGGAGFPSG) lines the NAD(+) pocket. 212–259 (GAGAYVCGEETSLIESLEGKPGKPRLKPPFPAAVGLFGCPSTVANVET) lines the FMN pocket. Residues Cys391, Cys394, Cys397, and Cys437 each contribute to the [4Fe-4S] cluster site.

It belongs to the complex I 51 kDa subunit family. As to quaternary structure, complex I is composed of about 40 different subunits. This is a component of the flavoprotein-sulfur (FP) fragment of the enzyme. FMN is required as a cofactor. The cofactor is [4Fe-4S] cluster.

Its subcellular location is the mitochondrion inner membrane. It catalyses the reaction a ubiquinone + NADH + 5 H(+)(in) = a ubiquinol + NAD(+) + 4 H(+)(out). Core subunit of the mitochondrial membrane respiratory chain NADH dehydrogenase (Complex I) that is believed to belong to the minimal assembly required for catalysis. Complex I functions in the transfer of electrons from NADH to the respiratory chain. The immediate electron acceptor for the enzyme is believed to be ubiquinone. The protein is NADH-ubiquinone oxidoreductase 51 kDa subunit, mitochondrial (nuo-51) of Neurospora crassa (strain ATCC 24698 / 74-OR23-1A / CBS 708.71 / DSM 1257 / FGSC 987).